We begin with the raw amino-acid sequence, 274 residues long: Malonyl-[acyl-carrier protein] O-methyltransferase (274 aa).

This sequence belongs to the methyltransferase superfamily.

The catalysed reaction is malonyl-[ACP] + S-adenosyl-L-methionine = malonyl-[ACP] methyl ester + S-adenosyl-L-homocysteine. It functions in the pathway cofactor biosynthesis; biotin biosynthesis. In terms of biological role, converts the free carboxyl group of a malonyl-thioester to its methyl ester by transfer of a methyl group from S-adenosyl-L-methionine (SAM). It allows to synthesize pimeloyl-ACP via the fatty acid synthetic pathway. The protein is Malonyl-[acyl-carrier protein] O-methyltransferase of Bacteroides helcogenes (strain ATCC 35417 / DSM 20613 / JCM 6297 / CCUG 15421 / P 36-108).